The following is a 680-amino-acid chain: Transketolase 1 (680 aa).

His-30 provides a ligand contact to substrate. Thiamine diphosphate is bound by residues His-69 and 116–118; that span reads GPL. Position 157 (Asp-157) interacts with Mg(2+). Residues Gly-158 and Asn-187 each contribute to the thiamine diphosphate site. 2 residues coordinate Mg(2+): Asn-187 and Ile-189. Residue His-263 coordinates substrate. His-263 lines the thiamine diphosphate pocket. Ser-286 and Ser-335 each carry phosphoserine. 2 residues coordinate substrate: Arg-359 and Ser-386. The residue at position 402 (Ser-402) is a Phosphoserine. Residues Glu-418 and Phe-445 each contribute to the thiamine diphosphate site. Residue Glu-418 is the Proton donor of the active site. Substrate-binding residues include His-469 and Asp-477. Ser-492 is subject to Phosphoserine. Arg-528 provides a ligand contact to substrate. Lys-647 is covalently cross-linked (Glycyl lysine isopeptide (Lys-Gly) (interchain with G-Cter in ubiquitin)).

This sequence belongs to the transketolase family. As to quaternary structure, homodimer. It depends on Mg(2+) as a cofactor. Requires Ca(2+) as cofactor. The cofactor is Mn(2+). Co(2+) serves as cofactor. Thiamine diphosphate is required as a cofactor.

The catalysed reaction is D-sedoheptulose 7-phosphate + D-glyceraldehyde 3-phosphate = aldehydo-D-ribose 5-phosphate + D-xylulose 5-phosphate. Catalyzes the transfer of a two-carbon ketol group from a ketose donor to an aldose acceptor, via a covalent intermediate with the cofactor thiamine pyrophosphate. This chain is Transketolase 1 (TKL1), found in Saccharomyces cerevisiae (strain ATCC 204508 / S288c) (Baker's yeast).